A 186-amino-acid chain; its full sequence is TATA box-binding protein-like 1 (186 aa).

Belongs to the TBP family. Expressed ubiquitously with highest expression in the ovary and testis.

Its subcellular location is the cytoplasm. It is found in the nucleus. Part of a specialized transcription system that mediates the transcription of most ribosomal proteins through the 5'-TCT-3' motif which is a core promoter element at these genes. Seems to also mediate the transcription of NF1. Does not bind the TATA box. Members of the TBP family are differentially required to regulate transcription and development during early embryogenesis. Particularly regulates genes that have a role in catabolism. This chain is TATA box-binding protein-like 1 (tbpl1), found in Xenopus laevis (African clawed frog).